A 511-amino-acid polypeptide reads, in one-letter code: GMP synthase [glutamine-hydrolyzing] (511 aa).

The Glutamine amidotransferase type-1 domain maps to 3-193; that stretch reads KILILDFGGQ…VYSICDVAGD (191 aa). Cys80 (nucleophile) is an active-site residue. Active-site residues include His167 and Glu169. One can recognise a GMPS ATP-PPase domain in the interval 194-384; it reads WEPKNIKLEK…LDIPYQNVYR (191 aa). ATP is bound at residue 221-227; that stretch reads SGGVDSL.

As to quaternary structure, homodimer.

The enzyme catalyses XMP + L-glutamine + ATP + H2O = GMP + L-glutamate + AMP + diphosphate + 2 H(+). The protein operates within purine metabolism; GMP biosynthesis; GMP from XMP (L-Gln route): step 1/1. Functionally, catalyzes the synthesis of GMP from XMP. The protein is GMP synthase [glutamine-hydrolyzing] of Malacoplasma penetrans (strain HF-2) (Mycoplasma penetrans).